A 224-amino-acid chain; its full sequence is Elongation factor 1-beta (224 aa).

Belongs to the EF-1-beta/EF-1-delta family. In terms of assembly, EF-1 is composed of 4 subunits: alpha, beta (1B-alpha=beta'), delta (1B-beta), and gamma (1B-gamma).

In terms of biological role, EF-1-beta and EF-1-beta' stimulate the exchange of GDP bound to EF-1-alpha to GTP. This is Elongation factor 1-beta from Oryza sativa subsp. japonica (Rice).